Consider the following 431-residue polypeptide: Adenylosuccinate synthetase (431 aa).

Residues 13 to 19 and 41 to 43 each bind GTP; these read GDEGKGK and GHT. The active-site Proton acceptor is D14. Residues D14 and G41 each coordinate Mg(2+). IMP contacts are provided by residues 14-17, 39-42, T130, R144, Q225, T240, and R304; these read DEGK and NAGH. Catalysis depends on H42, which acts as the Proton donor. A substrate-binding site is contributed by 300–306; the sequence is ATTGRKR. Residues R306, 332-334, and 415-417 contribute to the GTP site; these read KLD and STG.

It belongs to the adenylosuccinate synthetase family. Homodimer. Requires Mg(2+) as cofactor.

It localises to the cytoplasm. The catalysed reaction is IMP + L-aspartate + GTP = N(6)-(1,2-dicarboxyethyl)-AMP + GDP + phosphate + 2 H(+). Its pathway is purine metabolism; AMP biosynthesis via de novo pathway; AMP from IMP: step 1/2. Functionally, plays an important role in the de novo pathway of purine nucleotide biosynthesis. Catalyzes the first committed step in the biosynthesis of AMP from IMP. This chain is Adenylosuccinate synthetase, found in Shewanella halifaxensis (strain HAW-EB4).